The chain runs to 411 residues: Na(+)-translocating NADH-quinone reductase subunit F (411 aa).

A helical membrane pass occupies residues 5 to 25; the sequence is VILALGIAAFTVIVLVLVAII. Residues 36–130 enclose the 2Fe-2S ferredoxin-type domain; that stretch reads GDITIGINDD…NMEVELPEEI (95 aa). Residues cysteine 73, cysteine 79, cysteine 82, and cysteine 114 each coordinate [2Fe-2S] cluster. The FAD-binding FR-type domain occupies 133-273; it reads VKKWECTVIS…SGPFGEFFAK (141 aa).

Belongs to the NqrF family. In terms of assembly, composed of six subunits; NqrA, NqrB, NqrC, NqrD, NqrE and NqrF. [2Fe-2S] cluster is required as a cofactor. The cofactor is FAD.

The protein resides in the cell inner membrane. The catalysed reaction is a ubiquinone + n Na(+)(in) + NADH + H(+) = a ubiquinol + n Na(+)(out) + NAD(+). NQR complex catalyzes the reduction of ubiquinone-1 to ubiquinol by two successive reactions, coupled with the transport of Na(+) ions from the cytoplasm to the periplasm. The first step is catalyzed by NqrF, which accepts electrons from NADH and reduces ubiquinone-1 to ubisemiquinone by a one-electron transfer pathway. The polypeptide is Na(+)-translocating NADH-quinone reductase subunit F (Haemophilus influenzae (strain PittEE)).